The chain runs to 275 residues: Large ribosomal subunit protein uL2 (275 aa).

The interval 225-275 (MNPVDHPHGGGEGRSPIGRPPVTPWGKPALGTRTRNKKKASSKLIVKRRTK) is disordered. Residues 258 to 275 (TRNKKKASSKLIVKRRTK) are compositionally biased toward basic residues.

It belongs to the universal ribosomal protein uL2 family. As to quaternary structure, part of the 50S ribosomal subunit. Forms a bridge to the 30S subunit in the 70S ribosome.

In terms of biological role, one of the primary rRNA binding proteins. Required for association of the 30S and 50S subunits to form the 70S ribosome, for tRNA binding and peptide bond formation. It has been suggested to have peptidyltransferase activity; this is somewhat controversial. Makes several contacts with the 16S rRNA in the 70S ribosome. This chain is Large ribosomal subunit protein uL2, found in Desulforudis audaxviator (strain MP104C).